A 698-amino-acid chain; its full sequence is Probable xyloglucan glycosyltransferase 2 (698 aa).

Helical transmembrane passes span 124–144 (GFLA…WNGW) and 190–210 (ILLF…CFWI). The active site involves Asp-272. Substrate contacts are provided by Asp-331 and Asp-333. The active site involves Asp-425. 4 helical membrane passes run 503 to 523 (LILP…TMFV), 528 to 548 (LPVW…ILPS), 653 to 668 (LALS…RSLL), and 673 to 693 (IHFY…LDLI).

This sequence belongs to the glycosyltransferase 2 family. Plant cellulose synthase-like C subfamily.

It is found in the golgi apparatus membrane. Its function is as follows. Probable beta-1,4-glucan synthase rather involved in the synthesis of the xyloglucan backbone than cellulose. Seems to work simultaneously with xyloglucan 6-xylosyltransferase. Xyloglucan is a noncellulosic polysaccharides of plant cell wall and consists of a glucan backbone substituted by xylose, galactose and fucose. The polypeptide is Probable xyloglucan glycosyltransferase 2 (CSLC2) (Oryza sativa subsp. indica (Rice)).